A 182-amino-acid chain; its full sequence is Peptidoglycan L,D-endopeptidase MepK (182 aa).

The segment at residues 1-30 (MDKFDANRRKLLALGGVALGAAILPTPAFA) is a signal peptide (tat-type signal). His-133, Asp-140, and His-173 together coordinate Zn(2+).

Belongs to the peptidase M15 family. Zn(2+) serves as cofactor. In terms of processing, predicted to be exported by the Tat system. The position of the signal peptide cleavage has not been experimentally proven.

It participates in cell wall biogenesis; cell wall polysaccharide biosynthesis. In terms of biological role, l,D-endopeptidase that cleaves meso-diaminopimelic acid (mDAP)-mDAP cross-links in peptidoglycan. It works in conjunction with other elongation-specific D,D-endopeptidases to make space for efficient incorporation of nascent peptidoglycan strands into the sacculus and thus enable cell wall expansion. This Escherichia coli O157:H7 protein is Peptidoglycan L,D-endopeptidase MepK.